A 101-amino-acid chain; its full sequence is Small ribosomal subunit protein uS10 (101 aa).

It belongs to the universal ribosomal protein uS10 family. As to quaternary structure, part of the 30S ribosomal subunit.

Involved in the binding of tRNA to the ribosomes. The sequence is that of Small ribosomal subunit protein uS10 from Corynebacterium urealyticum (strain ATCC 43042 / DSM 7109).